Reading from the N-terminus, the 138-residue chain is Large ribosomal subunit protein uL16 (138 aa).

A compositionally biased stretch (basic residues) spans 1 to 19; sequence MLIPRRVKHRKQHHPKRSG. Residues 1–24 are disordered; sequence MLIPRRVKHRKQHHPKRSGAAKGG.

Belongs to the universal ribosomal protein uL16 family. As to quaternary structure, part of the 50S ribosomal subunit.

In terms of biological role, binds 23S rRNA and is also seen to make contacts with the A and possibly P site tRNAs. The protein is Large ribosomal subunit protein uL16 of Micrococcus luteus (strain ATCC 4698 / DSM 20030 / JCM 1464 / CCM 169 / CCUG 5858 / IAM 1056 / NBRC 3333 / NCIMB 9278 / NCTC 2665 / VKM Ac-2230) (Micrococcus lysodeikticus).